A 129-amino-acid polypeptide reads, in one-letter code: Small ribosomal subunit protein uS9 (129 aa).

Positions 107-129 are disordered; the sequence is SRTVERKKYGRRKARRSPQFSKR. Over residues 114–129 the composition is skewed to basic residues; it reads KYGRRKARRSPQFSKR.

This sequence belongs to the universal ribosomal protein uS9 family.

The sequence is that of Small ribosomal subunit protein uS9 from Campylobacter jejuni subsp. jejuni serotype O:23/36 (strain 81-176).